A 111-amino-acid polypeptide reads, in one-letter code: MLISVLKSKISYATVTGKDLFYVGSITIDSEIMKQANIIENEKVQVVNLNNGARLETYVIKGEPNSKTIALNGPAARRCEIGDQLFIISYAQVDPTRENIKPKLVDLKTGD.

The active-site Schiff-base intermediate with substrate; via pyruvic acid is S25. S25 is subject to Pyruvic acid (Ser). T57 provides a ligand contact to substrate. Y58 serves as the catalytic Proton donor. Residue G73–A75 coordinates substrate.

The protein belongs to the PanD family. In terms of assembly, heterooctamer of four alpha and four beta subunits. Pyruvate is required as a cofactor. In terms of processing, is synthesized initially as an inactive proenzyme, which is activated by self-cleavage at a specific serine bond to produce a beta-subunit with a hydroxyl group at its C-terminus and an alpha-subunit with a pyruvoyl group at its N-terminus.

It localises to the cytoplasm. The enzyme catalyses L-aspartate + H(+) = beta-alanine + CO2. It participates in cofactor biosynthesis; (R)-pantothenate biosynthesis; beta-alanine from L-aspartate: step 1/1. Functionally, catalyzes the pyruvoyl-dependent decarboxylation of aspartate to produce beta-alanine. This Francisella tularensis subsp. novicida (strain U112) protein is Aspartate 1-decarboxylase.